A 333-amino-acid polypeptide reads, in one-letter code: Leukocyte cell-derived chemotaxin 1 (333 aa).

The chain crosses the membrane as a helical span at residues 42–62; it reads VGAVVLISGAVLLLFGAIGAF. In terms of domain architecture, BRICHOS spans 104–201; the sequence is GSGAEEAIEV…LCGDLPIFWL (98 aa). The cysteines at positions 131 and 193 are disulfide-linked. The propeptide occupies 211–214; the sequence is RERR. Positions 212–269 are disordered; that stretch reads ERREVVRKTVPTTTKRPHSGPRGNPGPARMRNDSRPSVQEDSEPFNPDNPYHQEGESM. Asn243 carries an N-linked (GlcNAc...) asparagine glycan. Intrachain disulfides connect Cys281-Cys285, Cys282-Cys322, Cys292-Cys316, and Cys296-Cys312.

This sequence belongs to the chondromodulin-1 family. After cleavage, the post-translationally modified ChM-I is secreted as a glycoprotein.

It is found in the secreted. Its subcellular location is the extracellular space. The protein resides in the extracellular matrix. It localises to the endomembrane system. In terms of biological role, bifunctional growth regulator that stimulates the growth of cultured chondrocytes in the presence of basic fibroblast growth factor (FGF) but inhibits the growth of cultured vascular endothelial cells. May contribute to the rapid growth of cartilage and vascular invasion prior to the replacement of cartilage by bone during endochondral bone development. Inhibits in vitro tube formation and mobilization of endothelial cells. Plays a role as antiangiogenic factor in cardiac valves to suppress neovascularization. The protein is Leukocyte cell-derived chemotaxin 1 of Oryctolagus cuniculus (Rabbit).